Here is a 196-residue protein sequence, read N- to C-terminus: Crossover junction endodeoxyribonuclease RuvC (196 aa).

Residues Asp19, Glu80, and Asp153 contribute to the active site. Mg(2+) contacts are provided by Asp19, Glu80, and Asp153.

The protein belongs to the RuvC family. As to quaternary structure, homodimer which binds Holliday junction (HJ) DNA. The HJ becomes 2-fold symmetrical on binding to RuvC with unstacked arms; it has a different conformation from HJ DNA in complex with RuvA. In the full resolvosome a probable DNA-RuvA(4)-RuvB(12)-RuvC(2) complex forms which resolves the HJ. It depends on Mg(2+) as a cofactor.

The protein localises to the cytoplasm. It carries out the reaction Endonucleolytic cleavage at a junction such as a reciprocal single-stranded crossover between two homologous DNA duplexes (Holliday junction).. The RuvA-RuvB-RuvC complex processes Holliday junction (HJ) DNA during genetic recombination and DNA repair. Endonuclease that resolves HJ intermediates. Cleaves cruciform DNA by making single-stranded nicks across the HJ at symmetrical positions within the homologous arms, yielding a 5'-phosphate and a 3'-hydroxyl group; requires a central core of homology in the junction. The consensus cleavage sequence is 5'-(A/T)TT(C/G)-3'. Cleavage occurs on the 3'-side of the TT dinucleotide at the point of strand exchange. HJ branch migration catalyzed by RuvA-RuvB allows RuvC to scan DNA until it finds its consensus sequence, where it cleaves and resolves the cruciform DNA. The sequence is that of Crossover junction endodeoxyribonuclease RuvC from Cutibacterium acnes (strain DSM 16379 / KPA171202) (Propionibacterium acnes).